The sequence spans 216 residues: Large ribosomal subunit protein uL24m (216 aa).

Residues 1–9 (MRLTLLLEM) constitute a mitochondrion transit peptide. The KOW domain maps to 56 to 89 (YFRGDTVEVLHGKDAGKQGKVTQVVRARNWVVVD).

It belongs to the universal ribosomal protein uL24 family. Component of the mitochondrial ribosome large subunit (39S) which comprises a 16S rRNA and about 50 distinct proteins. In terms of tissue distribution, ubiquitous. Expressed at greater levels in the kidney, adipose tissue, muscle and liver than the brain, heart, ovary and lung.

The protein resides in the mitochondrion. This chain is Large ribosomal subunit protein uL24m (mrpl24), found in Xenopus laevis (African clawed frog).